Reading from the N-terminus, the 250-residue chain is Triosephosphate isomerase (250 aa).

Positions 10 and 12 each coordinate substrate. The active-site Electrophile is H94. E167 (proton acceptor) is an active-site residue.

Belongs to the triosephosphate isomerase family. As to quaternary structure, homodimer.

Its subcellular location is the cytoplasm. The catalysed reaction is D-glyceraldehyde 3-phosphate = dihydroxyacetone phosphate. The protein operates within carbohydrate biosynthesis; gluconeogenesis. It functions in the pathway carbohydrate degradation; glycolysis; D-glyceraldehyde 3-phosphate from glycerone phosphate: step 1/1. This Taenia solium (Pork tapeworm) protein is Triosephosphate isomerase.